Here is a 255-residue protein sequence, read N- to C-terminus: Ribonuclease PH (255 aa).

Phosphate is bound by residues Arg-86 and 124 to 126 (GTR).

This sequence belongs to the RNase PH family. Homohexameric ring arranged as a trimer of dimers.

It catalyses the reaction tRNA(n+1) + phosphate = tRNA(n) + a ribonucleoside 5'-diphosphate. Functionally, phosphorolytic 3'-5' exoribonuclease that plays an important role in tRNA 3'-end maturation. Removes nucleotide residues following the 3'-CCA terminus of tRNAs; can also add nucleotides to the ends of RNA molecules by using nucleoside diphosphates as substrates, but this may not be physiologically important. Probably plays a role in initiation of 16S rRNA degradation (leading to ribosome degradation) during starvation. The protein is Ribonuclease PH of Hydrogenobaculum sp. (strain Y04AAS1).